The chain runs to 255 residues: tRNA (guanine-N(7)-)-methyltransferase (255 aa).

The disordered stretch occupies residues 1–29; the sequence is MSDSDASRPSAIASDGPDAAGKHASGAPW. Residues E86, E111, D138, and D160 each coordinate S-adenosyl-L-methionine. D160 is an active-site residue. Substrate is bound by residues K164, D196, and 233 to 236; that span reads TRYE.

It belongs to the class I-like SAM-binding methyltransferase superfamily. TrmB family.

The catalysed reaction is guanosine(46) in tRNA + S-adenosyl-L-methionine = N(7)-methylguanosine(46) in tRNA + S-adenosyl-L-homocysteine. It participates in tRNA modification; N(7)-methylguanine-tRNA biosynthesis. Functionally, catalyzes the formation of N(7)-methylguanine at position 46 (m7G46) in tRNA. The chain is tRNA (guanine-N(7)-)-methyltransferase from Ruegeria sp. (strain TM1040) (Silicibacter sp.).